The chain runs to 154 residues: MAARLCCQLDPARDVLCLRPVGAESRGRPLPGPLGALPPASPPIVPSDHGAHLSLRGLPVCAFSSAGPCALRFTSARRMETTVNAHWNLPKVLHKRTLGLSAMSTTDLEAYFKDCVFTEWEELGEEFRLKVFVLGGCRHKLVCSPAPCNFFTSA.

The segment at 68 to 117 (PCALRFTSARRMETTVNAHWNLPKVLHKRTLGLSAMSTTDLEAYFKDCVF) is mitochondrial targeting sequence.

The protein belongs to the orthohepadnavirus protein X family. May form homodimer. May interact with host CEBPA, CFLAR, CREB1, DDB1, E4F1, HBXIP, HSPD1/HSP60, NFKBIA, POLR2E and SMAD4. Interacts with host SMC5-SMC6 complex and induces its degradation. Interacts with host TRPC4AP; leading to prevent ubiquitination of TRPC4AP. Interacts with host PLSCR1; this interaction promotes ubiquitination and degradation of HBx and impairs HBx-mediated cell proliferation. Post-translationally, a fraction may be phosphorylated in insect cells and HepG2 cells, a human hepatoblastoma cell line. Phosphorylated in vitro by host protein kinase C or mitogen-activated protein kinase. N-acetylated in insect cells.

It is found in the host cytoplasm. The protein localises to the host nucleus. The protein resides in the host mitochondrion. Multifunctional protein that plays a role in silencing host antiviral defenses and promoting viral transcription. Does not seem to be essential for HBV infection. May be directly involved in development of cirrhosis and liver cancer (hepatocellular carcinoma). Most of cytosolic activities involve modulation of cytosolic calcium. The effect on apoptosis is controversial depending on the cell types in which the studies have been conducted. May induce apoptosis by localizing in mitochondria and causing loss of mitochondrial membrane potential. May also modulate apoptosis by binding host CFLAR, a key regulator of the death-inducing signaling complex (DISC). Promotes viral transcription by using the host E3 ubiquitin ligase DDB1 to target the SMC5-SMC6 complex to proteasomal degradation. This host complex would otherwise bind to viral episomal DNA, and prevents its transcription. Moderately stimulates transcription of many different viral and cellular transcription elements. Promoters and enhancers stimulated by HBx contain DNA binding sites for NF-kappa-B, AP-1, AP-2, c-EBP, ATF/CREB, or the calcium-activated factor NF-AT. The chain is Protein X from Hepatitis B virus genotype B2 (isolate Vietnam/9873/1997) (HBV-B).